The primary structure comprises 299 residues: Troponin T, cardiac muscle (299 aa).

Acidic residues predominate over residues 1 to 71; sequence MSDAEEEVVE…EARDAEDGPV (71 aa). 2 disordered regions span residues 1–97 and 137–220; these read MSDA…GERV and DRIE…EKKK. N-acetylserine is present on Ser2. Ser2 carries the post-translational modification Phosphoserine. Composition is skewed to basic and acidic residues over residues 137–185 and 204–220; these read DRIE…DEAR and QTERKSGKRQTEREKKK. At Thr205 the chain carries Phosphothreonine; by PKC/PRKCA. Position 209 is a phosphoserine; by PKC/PRKCA (Ser209). Phosphothreonine; by PKC/PRKCA and RAF1 is present on Thr214. Thr295 carries the post-translational modification Phosphothreonine; by PKC/PRKCA.

This sequence belongs to the troponin T family. In terms of processing, phosphorylation at Thr-214 by PRKCA induces significant reduction in myofilament calcium sensitivity and actomyosin ATPase activity.

Its function is as follows. Troponin T is the tropomyosin-binding subunit of troponin, the thin filament regulatory complex which confers calcium-sensitivity to striated muscle actomyosin ATPase activity. The polypeptide is Troponin T, cardiac muscle (Tnnt2) (Rattus norvegicus (Rat)).